The chain runs to 79 residues: uncharacterized protein (79 aa).

Transmembrane regions (helical) follow at residues 18-38 (IWIINLKVIIKIIISEIIVLI) and 50-70 (GITFVKNEFIISSIFYFFFLF).

The protein localises to the host membrane. This is an uncharacterized protein from Spiroplasma virus SpV1-R8A2 B (SpV1).